Reading from the N-terminus, the 287-residue chain is Chlorophyll a-b binding protein CP29.2, chloroplastic (287 aa).

A chloroplast-targeting transit peptide spans 1–31 (MAATSTAAAASSIMGTRVVSDISSNSSRFTA). R32 carries the post-translational modification N2-acetylarginine. T37 carries the phosphothreonine modification. Position 55 (W55) interacts with chlorophyll b. F75 contributes to the chlorophyll a binding site. T109 and T111 each carry phosphothreonine. Chlorophyll a-binding residues include E137 and H140. The chain crosses the membrane as a helical span at residues 143 to 163 (WAMLATLGAITVEWLTGVTWQ). A chlorophyll a-binding site is contributed by L177. Residues 181–201 (LPFSISTLIWIEVLVIGYIEF) traverse the membrane as a helical segment. Chlorophyll b-binding residues include E200 and R203. Positions 239, 242, 244, 256, and 271 each coordinate chlorophyll a. A helical transmembrane segment spans residues 245–265 (LAMVGFLGFAVQAAATGKGPL).

Belongs to the light-harvesting chlorophyll a/b-binding (LHC) protein family. In terms of assembly, the LHC complex consists of chlorophyll a-b binding proteins. The cofactor is Binds at least 14 chlorophylls (8 Chl-a and 6 Chl-b) and carotenoids such as lutein and neoxanthin.. Post-translationally, photoregulated by reversible phosphorylation of its threonine residues.

It is found in the plastid. The protein localises to the chloroplast thylakoid membrane. The light-harvesting complex (LHC) functions as a light receptor, it captures and delivers excitation energy to photosystems with which it is closely associated. This chain is Chlorophyll a-b binding protein CP29.2, chloroplastic (LHCB4.2), found in Arabidopsis thaliana (Mouse-ear cress).